The primary structure comprises 962 residues: Glycine dehydrogenase (decarboxylating) (962 aa).

K709 is modified (N6-(pyridoxal phosphate)lysine).

It belongs to the GcvP family. In terms of assembly, the glycine cleavage system is composed of four proteins: P, T, L and H. The cofactor is pyridoxal 5'-phosphate.

The catalysed reaction is N(6)-[(R)-lipoyl]-L-lysyl-[glycine-cleavage complex H protein] + glycine + H(+) = N(6)-[(R)-S(8)-aminomethyldihydrolipoyl]-L-lysyl-[glycine-cleavage complex H protein] + CO2. In terms of biological role, the glycine cleavage system catalyzes the degradation of glycine. The P protein binds the alpha-amino group of glycine through its pyridoxal phosphate cofactor; CO(2) is released and the remaining methylamine moiety is then transferred to the lipoamide cofactor of the H protein. This chain is Glycine dehydrogenase (decarboxylating), found in Shewanella sp. (strain MR-4).